We begin with the raw amino-acid sequence, 520 residues long: Succinyl-CoA:3-ketoacid coenzyme A transferase 2A, mitochondrial (520 aa).

The transit peptide at 1–39 directs the protein to the mitochondrion; that stretch reads MAALRLLAWAFSRRVSAHRPQPTLPHHLIRHYPTTRCGK. The disordered stretch occupies residues 280 to 299; that stretch reads ERLTTRDSPPAPGSKDQDPK. E342 acts as the 5-glutamyl coenzyme A thioester intermediate in catalysis.

Belongs to the 3-oxoacid CoA-transferase family. As to quaternary structure, homodimer. As to expression, expressed in flagella of epididymal sperm.

The protein localises to the mitochondrion. The enzyme catalyses a 3-oxo acid + succinyl-CoA = a 3-oxoacyl-CoA + succinate. It participates in ketone metabolism; succinyl-CoA degradation; acetoacetyl-CoA from succinyl-CoA: step 1/1. Functionally, key enzyme for ketone body catabolism. Transfers the CoA moiety from succinate to acetoacetate. Formation of the enzyme-CoA intermediate proceeds via an unstable anhydride species formed between the carboxylate groups of the enzyme and substrate. Probably play and important roles in the energy metabolism of spermatozoa. The sequence is that of Succinyl-CoA:3-ketoacid coenzyme A transferase 2A, mitochondrial (Oxct2a) from Rattus norvegicus (Rat).